Here is a 335-residue protein sequence, read N- to C-terminus: NAC domain-containing protein 87 (335 aa).

One can recognise an NAC domain in the interval 21–172 (LPPGFRFHPT…EWVVCRVFHK (152 aa)). Residues 119-178 (VGMKKTLVFYRGRAPKGEKTNWVMHEYRLEGKYSYYNLPKSARDEWVVCRVFHKNNPSTT) mediate DNA binding.

It is found in the nucleus. Functionally, binds to the promoter regions of genes involved in chlorophyll catabolic processes, such as NYC1, SGR1, SGR2 and PAO. The polypeptide is NAC domain-containing protein 87 (Arabidopsis thaliana (Mouse-ear cress)).